A 309-amino-acid polypeptide reads, in one-letter code: Vomeronasal type-1 receptor 46 (309 aa).

The Extracellular segment spans residues 1 to 20; the sequence is MNKANIFCTDTNMKVILFSE. Residues 21–41 traverse the membrane as a helical segment; it reads VSVGISANSILFISHLCMFLG. The Cytoplasmic segment spans residues 42-50; the sequence is ESRPKPIDL. A helical transmembrane segment spans residues 51–71; it reads YIAFFSLTHLMLLVTMGLIAV. The Extracellular segment spans residues 72–85; the sequence is DMFMPGGRWDSTTC. A disulfide bridge links Cys-85 with Cys-171. Residues 86 to 106 form a helical membrane-spanning segment; that stretch reads TFLMYLHIVLRGPTLCATCLL. At 107-134 the chain is on the cytoplasmic side; it reads NVLWTITLSPRNSCLTKFKHKSPHHISG. A helical transmembrane segment spans residues 135–155; the sequence is AFLFLCVLYMSLSSELLSITA. Over 156 to 192 the chain is Extracellular; sequence SLNLTSENFLYVSQSCSILPMSYSIKSMFSTKMAIRE. Asn-158 is a glycosylation site (N-linked (GlcNAc...) asparagine). The chain crosses the membrane as a helical span at residues 193-213; that stretch reads AFLIGLMVLSSGYMVALLWSH. The Cytoplasmic portion of the chain corresponds to 214-237; sequence KKQAQHLHSNSLSLKASPEQRATR. The chain crosses the membrane as a helical span at residues 238 to 258; that stretch reads TIMLLMSFFVVFYILDSVIFY. Residues 259–267 lie on the Extracellular side of the membrane; it reads SRMKFKDDS. Residues 268 to 288 traverse the membrane as a helical segment; that stretch reads IFVCVQIIVSHSYVTVSPFVF. The Cytoplasmic segment spans residues 289–309; it reads ICTEKHIIKFFWSLCGRIVNI.

It belongs to the G-protein coupled receptor 1 family.

It localises to the cell membrane. Functionally, putative pheromone receptor implicated in the regulation of social and reproductive behavior. The polypeptide is Vomeronasal type-1 receptor 46 (Vmn1r46) (Mus musculus (Mouse)).